A 101-amino-acid polypeptide reads, in one-letter code: Chaperone modulatory protein CbpM (101 aa).

Belongs to the CbpM family.

Its function is as follows. Interacts with CbpA and inhibits both the DnaJ-like co-chaperone activity and the DNA binding activity of CbpA. Together with CbpA, modulates the activity of the DnaK chaperone system. Does not inhibit the co-chaperone activity of DnaJ. The protein is Chaperone modulatory protein CbpM of Citrobacter koseri (strain ATCC BAA-895 / CDC 4225-83 / SGSC4696).